The sequence spans 591 residues: Aspartate--tRNA ligase (591 aa).

Glutamate 176 contacts L-aspartate. The aspartate stretch occupies residues 200–203; that stretch reads QILK. Residue arginine 222 coordinates L-aspartate. ATP-binding positions include 222-224 and glutamine 231; that span reads RDE. Histidine 450 contacts L-aspartate. Glutamate 484 lines the ATP pocket. Position 491 (arginine 491) interacts with L-aspartate. An ATP-binding site is contributed by 536–539; sequence GLDR.

It belongs to the class-II aminoacyl-tRNA synthetase family. Type 1 subfamily. In terms of assembly, homodimer.

It is found in the cytoplasm. The enzyme catalyses tRNA(Asp) + L-aspartate + ATP = L-aspartyl-tRNA(Asp) + AMP + diphosphate. Functionally, catalyzes the attachment of L-aspartate to tRNA(Asp) in a two-step reaction: L-aspartate is first activated by ATP to form Asp-AMP and then transferred to the acceptor end of tRNA(Asp). In Listeria monocytogenes serovar 1/2a (strain ATCC BAA-679 / EGD-e), this protein is Aspartate--tRNA ligase.